A 503-amino-acid chain; its full sequence is MSADPTVPQLLVPLAEIGDRGIYFEDSFTSWADHIGHGAAIAAALRERLDPTRPPHVGVLLQNTPFFSAMLAAAGMSGIIPVGLNPVRRGAALARDIEHADCQMVLADTASASTLDGIEHVNVDSAEWAEVIDAHRNSEISFQNAAPADLFMLIYTSGTSGDPKAVKCSHSKVAIAGVTMTQRFGLGRDDVCYVSMPLFHSNAVLVGWAVAVACQGSMALRRKFSASQFLSDVRRYGATYANYVGKPLSYVLATPERPDDADNPLRAVYGNEGVPGDSERFGCRFGCVVQDGFGSTEGGVAIARTPDTPAGSLGPLPENIEILDPETGQQCPVGAVGELVNTAGPGRFEGYYNDEAASAQRMSGGVYHSGDLAYRDAAGYAYFAGRLGDWMRVDGENLGTAPIERVLLRYPDAIEVAVYAIPDPVVGDQVMAAMVLTPGAKFDVDKFRAFLAGQSDLGPKQWPSYVRICSALPRTETFKVLKRQLAADGVDCGDPVWPIRDQS.

Belongs to the ATP-dependent AMP-binding enzyme family.

The enzyme catalyses a medium-chain fatty acid + ATP + CoA = a medium-chain fatty acyl-CoA + AMP + diphosphate. The catalysed reaction is a long-chain fatty acid + ATP + CoA = a long-chain fatty acyl-CoA + AMP + diphosphate. It functions in the pathway lipid metabolism; fatty acid biosynthesis. Its function is as follows. Catalyzes the activation of medium/long-chain fatty acids as acyl-coenzyme A (acyl-CoA), which are then transferred to the multifunctional polyketide synthase (PKS) type III for further chain extension. The polypeptide is Medium/long-chain-fatty-acid--CoA ligase FadD17 (fadD17) (Mycobacterium marinum (strain ATCC BAA-535 / M)).